A 177-amino-acid chain; its full sequence is Thioredoxin M-type, chloroplastic (177 aa).

The N-terminal 64 residues, 1–64 (MAAFTCTSSP…SRLRRGGIIC (64 aa)), are a transit peptide targeting the chloroplast. The 113-residue stretch at 65-177 (EAQDTATGIP…LATSIDKFLQ (113 aa)) folds into the Thioredoxin domain. Residues cysteine 101 and cysteine 104 each act as nucleophile in the active site. An intrachain disulfide couples cysteine 101 to cysteine 104.

This sequence belongs to the thioredoxin family. Plant M-type subfamily. Forms a complex with heterodimeric ferredoxin-thioredoxin reductase (FTR) and ferredoxin.

It is found in the plastid. It localises to the chloroplast. Participates in various redox reactions through the reversible oxidation of the active center dithiol to a disulfide. The M form is known to activate NADP-malate dehydrogenase. The sequence is that of Thioredoxin M-type, chloroplastic from Brassica napus (Rape).